Reading from the N-terminus, the 131-residue chain is Small ribosomal subunit protein eS8 (131 aa).

The disordered stretch occupies residues 11 to 36 (DLKKPSGGKKGRVRKTKKKALCGGPP). Residues 16–30 (SGGKKGRVRKTKKKA) are compositionally biased toward basic residues.

This sequence belongs to the eukaryotic ribosomal protein eS8 family. As to quaternary structure, part of the 30S ribosomal subunit.

The chain is Small ribosomal subunit protein eS8 from Pyrobaculum islandicum (strain DSM 4184 / JCM 9189 / GEO3).